The following is a 147-amino-acid chain: Transthyretin (147 aa).

The N-terminal stretch at 1–20 (MASHRLLLLCLAGLVFVSEA) is a signal peptide. At Cys30 the chain carries Sulfocysteine. Lys35 serves as a coordination point for L-thyroxine. Glu62 bears the 4-carboxyglutamate mark. Ser72 carries the phosphoserine modification. Residue Glu74 participates in L-thyroxine binding. Residue Asn118 is glycosylated (N-linked (GlcNAc...) asparagine). Ser137 contacts L-thyroxine.

This sequence belongs to the transthyretin family. As to quaternary structure, homotetramer. Dimer of dimers. In the homotetramer, subunits assemble around a central channel that can accommodate two ligand molecules. Interacts with RBP4. Sulfonation of the reactive cysteine Cys-30 enhances the stability of the native conformation of TTR, avoiding misassembly of the protein leading to amyloid formation. In terms of tissue distribution, detected in liver.

It is found in the secreted. Functionally, thyroid hormone-binding protein. Probably transports thyroxine from the bloodstream to the brain. The polypeptide is Transthyretin (TTR) (Pongo abelii (Sumatran orangutan)).